Here is a 214-residue protein sequence, read N- to C-terminus: Holliday junction branch migration complex subunit RuvA (214 aa).

The tract at residues 1 to 63 (MISSLRGTVL…EDSLTLFGFP (63 aa)) is domain I. A domain II region spans residues 64–139 (GPDELRAFEL…KLFVTQPRAR (76 aa)). A flexible linker region spans residues 139 to 143 (RSATS). Residues 144-214 (AASTVTADVV…AAPTGQAADR (71 aa)) are domain III.

Belongs to the RuvA family. In terms of assembly, homotetramer. Forms an RuvA(8)-RuvB(12)-Holliday junction (HJ) complex. HJ DNA is sandwiched between 2 RuvA tetramers; dsDNA enters through RuvA and exits via RuvB. An RuvB hexamer assembles on each DNA strand where it exits the tetramer. Each RuvB hexamer is contacted by two RuvA subunits (via domain III) on 2 adjacent RuvB subunits; this complex drives branch migration. In the full resolvosome a probable DNA-RuvA(4)-RuvB(12)-RuvC(2) complex forms which resolves the HJ.

It is found in the cytoplasm. Functionally, the RuvA-RuvB-RuvC complex processes Holliday junction (HJ) DNA during genetic recombination and DNA repair, while the RuvA-RuvB complex plays an important role in the rescue of blocked DNA replication forks via replication fork reversal (RFR). RuvA specifically binds to HJ cruciform DNA, conferring on it an open structure. The RuvB hexamer acts as an ATP-dependent pump, pulling dsDNA into and through the RuvAB complex. HJ branch migration allows RuvC to scan DNA until it finds its consensus sequence, where it cleaves and resolves the cruciform DNA. In Clavibacter michiganensis subsp. michiganensis (strain NCPPB 382), this protein is Holliday junction branch migration complex subunit RuvA.